A 423-amino-acid chain; its full sequence is RNA polymerase sigma factor SigA (423 aa).

Residues 1 to 76 (MKKSKRKNAQ…EEDLPIPKIS (76 aa)) are disordered. A compositionally biased stretch (acidic residues) spans 21-70 (VQEEAEELPEFPEGEPDPDLEDPDLALEDDLLDLPEEGEGLDLEEEEEDL). A sigma-70 factor domain-1 region spans residues 78 to 113 (SDPVRQYLHEIGQVPLLTLEEEVELARKVEEGMEAI). The tract at residues 187 to 257 (LIEANLRLVV…NRAIADQART (71 aa)) is sigma-70 factor domain-2. Positions 211 to 214 (DLIQ) match the Interaction with polymerase core subunit RpoC motif. Positions 266–344 (ETINKLSRTA…DEHLPSPVDA (79 aa)) are sigma-70 factor domain-3. Residues 357 to 409 (ALSKLSEREAMVLKLRKGLIDGREHTLEEVGAFFGVTRERIRQIENKALRKLK) form a sigma-70 factor domain-4 region. The segment at residues 383–402 (LEEVGAFFGVTRERIRQIEN) is a DNA-binding region (H-T-H motif).

Belongs to the sigma-70 factor family. RpoD/SigA subfamily. Interacts transiently with the RNA polymerase catalytic core formed by RpoA, RpoB, RpoC and RpoZ (2 alpha, 1 beta, 1 beta' and 1 omega subunit) to form the RNA polymerase holoenzyme that can initiate transcription.

Its subcellular location is the cytoplasm. Its function is as follows. Sigma factors are initiation factors that promote the attachment of RNA polymerase to specific initiation sites and are then released. This sigma factor is the primary sigma factor during exponential growth. The protein is RNA polymerase sigma factor SigA of Thermus thermophilus (strain ATCC BAA-163 / DSM 7039 / HB27).